The chain runs to 257 residues: tRNA pseudouridine synthase A (257 aa).

Asp-53 (nucleophile) is an active-site residue. Tyr-111 is a binding site for substrate.

This sequence belongs to the tRNA pseudouridine synthase TruA family. As to quaternary structure, homodimer.

It carries out the reaction uridine(38/39/40) in tRNA = pseudouridine(38/39/40) in tRNA. Formation of pseudouridine at positions 38, 39 and 40 in the anticodon stem and loop of transfer RNAs. The protein is tRNA pseudouridine synthase A of Xanthomonas oryzae pv. oryzae (strain MAFF 311018).